The sequence spans 433 residues: Dihydrolipoyllysine-residue acetyltransferase component of pyruvate dehydrogenase complex (433 aa).

The Lipoyl-binding domain maps to 2-77 (AFEFRLPDIG…VVGDVIVKID (76 aa)). Lys-43 is subject to N6-lipoyllysine. Disordered stretches follow at residues 80 to 134 (DAEE…PSVR) and 164 to 204 (YLNG…FPET). 2 stretches are compositionally biased toward basic and acidic residues: residues 84 to 103 (MQFK…KEQE) and 117 to 126 (EKTEVDESKT). In terms of domain architecture, Peripheral subunit-binding (PSBD) spans 128–165 (KAMPSVRKYARENGVNIKAVNGSGKNGRITKEDIDAYL). Residues 166–188 (NGGSSEEGSNTSVASESTSSDVV) show a composition bias toward low complexity. Residue His-404 is part of the active site.

It belongs to the 2-oxoacid dehydrogenase family. In terms of assembly, forms a 24-polypeptide structural core with octahedral symmetry. (R)-lipoate is required as a cofactor.

It carries out the reaction N(6)-[(R)-dihydrolipoyl]-L-lysyl-[protein] + acetyl-CoA = N(6)-[(R)-S(8)-acetyldihydrolipoyl]-L-lysyl-[protein] + CoA. Its function is as follows. The pyruvate dehydrogenase complex catalyzes the overall conversion of pyruvate to acetyl-CoA and CO(2). It contains multiple copies of three enzymatic components: pyruvate dehydrogenase (E1), dihydrolipoamide acetyltransferase (E2) and lipoamide dehydrogenase (E3). This is Dihydrolipoyllysine-residue acetyltransferase component of pyruvate dehydrogenase complex (pdhC) from Staphylococcus epidermidis (strain ATCC 12228 / FDA PCI 1200).